We begin with the raw amino-acid sequence, 37 residues long: Defensin-A (37 aa).

Intrachain disulfides connect C4-C25, C10-C33, and C14-C35.

The protein localises to the secreted. In terms of biological role, has antibacterial activity against M.luteus and E.coli. The sequence is that of Defensin-A from Mytilus edulis (Blue mussel).